Here is a 213-residue protein sequence, read N- to C-terminus: Thymidylate kinase (213 aa).

Residue 10–17 participates in ATP binding; that stretch reads GLEGAGKT.

This sequence belongs to the thymidylate kinase family.

It carries out the reaction dTMP + ATP = dTDP + ADP. In terms of biological role, phosphorylation of dTMP to form dTDP in both de novo and salvage pathways of dTTP synthesis. The polypeptide is Thymidylate kinase (Escherichia coli O6:H1 (strain CFT073 / ATCC 700928 / UPEC)).